A 423-amino-acid polypeptide reads, in one-letter code: Tubulin beta-2 chain (423 aa).

GTP-binding residues include glutamate 44, serine 113, glycine 117, threonine 118, glycine 119, asparagine 179, and asparagine 201. Position 44 (glutamate 44) interacts with Mg(2+). Residues 394-423 (VSEYQQYQDATAEEEGEYDEDEDDEGGDYA) form a disordered region. Residues 404 to 423 (TAEEEGEYDEDEDDEGGDYA) are compositionally biased toward acidic residues.

It belongs to the tubulin family. In terms of assembly, dimer of alpha and beta chains. A typical microtubule is a hollow water-filled tube with an outer diameter of 25 nm and an inner diameter of 15 nM. Alpha-beta heterodimers associate head-to-tail to form protofilaments running lengthwise along the microtubule wall with the beta-tubulin subunit facing the microtubule plus end conferring a structural polarity. Microtubules usually have 13 protofilaments but different protofilament numbers can be found in some organisms and specialized cells. The cofactor is Mg(2+).

The protein resides in the cytoplasm. It is found in the cytoskeleton. Functionally, tubulin is the major constituent of microtubules, a cylinder consisting of laterally associated linear protofilaments composed of alpha- and beta-tubulin heterodimers. Microtubules grow by the addition of GTP-tubulin dimers to the microtubule end, where a stabilizing cap forms. Below the cap, tubulin dimers are in GDP-bound state, owing to GTPase activity of alpha-tubulin. This Oomycete-like sp. (strain MacKay2000) protein is Tubulin beta-2 chain (TUBB2).